The chain runs to 369 residues: Anhydro-N-acetylmuramic acid kinase (369 aa).

12–19 (GTSLDGVD) serves as a coordination point for ATP.

The protein belongs to the anhydro-N-acetylmuramic acid kinase family.

It carries out the reaction 1,6-anhydro-N-acetyl-beta-muramate + ATP + H2O = N-acetyl-D-muramate 6-phosphate + ADP + H(+). It functions in the pathway amino-sugar metabolism; 1,6-anhydro-N-acetylmuramate degradation. It participates in cell wall biogenesis; peptidoglycan recycling. In terms of biological role, catalyzes the specific phosphorylation of 1,6-anhydro-N-acetylmuramic acid (anhMurNAc) with the simultaneous cleavage of the 1,6-anhydro ring, generating MurNAc-6-P. Is required for the utilization of anhMurNAc either imported from the medium or derived from its own cell wall murein, and thus plays a role in cell wall recycling. In Shigella boydii serotype 18 (strain CDC 3083-94 / BS512), this protein is Anhydro-N-acetylmuramic acid kinase.